The following is a 509-amino-acid chain: Steroid 17-alpha-hydroxylase/17,20 lyase (509 aa).

Position 202 (asparagine 202) interacts with substrate. Cysteine 442 contacts heme.

The protein belongs to the cytochrome P450 family. Requires heme as cofactor.

Its subcellular location is the endoplasmic reticulum membrane. It localises to the microsome membrane. The catalysed reaction is a C21-steroid + reduced [NADPH--hemoprotein reductase] + O2 = a 17alpha-hydroxy-C21-steroid + oxidized [NADPH--hemoprotein reductase] + H2O + H(+). The enzyme catalyses progesterone + reduced [NADPH--hemoprotein reductase] + O2 = 17alpha-hydroxyprogesterone + oxidized [NADPH--hemoprotein reductase] + H2O + H(+). It carries out the reaction pregnenolone + reduced [NADPH--hemoprotein reductase] + O2 = 17alpha-hydroxypregnenolone + oxidized [NADPH--hemoprotein reductase] + H2O + H(+). It catalyses the reaction 17alpha-hydroxyprogesterone + reduced [NADPH--hemoprotein reductase] + O2 = androst-4-ene-3,17-dione + acetate + oxidized [NADPH--hemoprotein reductase] + H2O + 2 H(+). The catalysed reaction is 17alpha-hydroxyprogesterone + reduced [NADPH--hemoprotein reductase] + O2 = 16alpha,17alpha-dihydroxyprogesterone + oxidized [NADPH--hemoprotein reductase] + H2O + H(+). The enzyme catalyses 16alpha,17alpha-dihydroxyprogesterone + reduced [NADPH--hemoprotein reductase] + O2 = 6beta,16alpha,17alpha-trihydroxyprogesterone + oxidized [NADPH--hemoprotein reductase] + H2O + H(+). It carries out the reaction 17alpha-hydroxypregnenolone + reduced [NADPH--hemoprotein reductase] + O2 = 3beta-hydroxyandrost-5-en-17-one + acetate + oxidized [NADPH--hemoprotein reductase] + H2O + 2 H(+). It catalyses the reaction 16alpha,17alpha-dihydroxypregnenolone + reduced [NADPH--hemoprotein reductase] + O2 = 3beta,16alpha-dihydroxy-androst-5-en-17-one + acetate + oxidized [NADPH--hemoprotein reductase] + H2O + 2 H(+). The catalysed reaction is 3beta-hydroxyandrost-5-en-17-one + reduced [NADPH--hemoprotein reductase] + O2 = 3beta,16alpha-dihydroxy-androst-5-en-17-one + oxidized [NADPH--hemoprotein reductase] + H2O + H(+). The enzyme catalyses androst-4-ene-3,17-dione + reduced [NADPH--hemoprotein reductase] + O2 = 16alpha-hydroxyandrost-4-ene-3,17-dione + oxidized [NADPH--hemoprotein reductase] + H2O + H(+). The protein operates within steroid hormone biosynthesis. It participates in steroid biosynthesis; glucocorticoid biosynthesis. Its activity is regulated as follows. Regulated predominantly by intracellular cAMP levels. The 17,20-lyase activity is stimulated by cytochrome b5, which acts as an allosteric effector increasing the Vmax of the lyase activity. A cytochrome P450 monooxygenase involved in corticoid and androgen biosynthesis. Catalyzes 17-alpha hydroxylation of C21 steroids, which is common for both pathways. A second oxidative step, required only for androgen synthesis, involves an acyl-carbon cleavage. The 17-alpha hydroxy intermediates, as part of adrenal glucocorticoids biosynthesis pathway, are precursors of cortisol. Hydroxylates steroid hormones, pregnenolone and progesterone to form 17-alpha hydroxy metabolites, followed by the cleavage of the C17-C20 bond to form C19 steroids, dehydroepiandrosterone (DHEA) and androstenedione. Has 16-alpha hydroxylase activity. Catalyzes 16-alpha hydroxylation of 17-alpha hydroxy pregnenolone, followed by the cleavage of the C17-C20 bond to form 16-alpha-hydroxy DHEA. Also 16-alpha hydroxylates androgens, relevant for estriol synthesis. Mechanistically, uses molecular oxygen inserting one oxygen atom into a substrate, and reducing the second into a water molecule, with two electrons provided by NADPH via cytochrome P450 reductase (CPR; NADPH-ferrihemoprotein reductase). In Ovis aries (Sheep), this protein is Steroid 17-alpha-hydroxylase/17,20 lyase (CYP17A1).